A 131-amino-acid chain; its full sequence is D-ribose pyranase (131 aa).

Histidine 20 serves as the catalytic Proton donor. Substrate-binding positions include aspartate 28, histidine 98, and 120–122 (YAN).

The protein belongs to the RbsD / FucU family. RbsD subfamily. As to quaternary structure, homodecamer.

It is found in the cytoplasm. It catalyses the reaction beta-D-ribopyranose = beta-D-ribofuranose. It participates in carbohydrate metabolism; D-ribose degradation; D-ribose 5-phosphate from beta-D-ribopyranose: step 1/2. Catalyzes the interconversion of beta-pyran and beta-furan forms of D-ribose. The protein is D-ribose pyranase of Clostridium novyi (strain NT).